We begin with the raw amino-acid sequence, 318 residues long: CRISPR-associated endonuclease Cas1 1 (318 aa).

Glu160, His225, and Glu240 together coordinate Mn(2+).

Belongs to the CRISPR-associated endonuclease Cas1 family. As to quaternary structure, homodimer, forms a heterotetramer with a Cas2 homodimer. It depends on Mg(2+) as a cofactor. Requires Mn(2+) as cofactor.

Functionally, CRISPR (clustered regularly interspaced short palindromic repeat), is an adaptive immune system that provides protection against mobile genetic elements (viruses, transposable elements and conjugative plasmids). CRISPR clusters contain spacers, sequences complementary to antecedent mobile elements, and target invading nucleic acids. CRISPR clusters are transcribed and processed into CRISPR RNA (crRNA). Acts as a dsDNA endonuclease. Involved in the integration of spacer DNA into the CRISPR cassette. This chain is CRISPR-associated endonuclease Cas1 1, found in Thermodesulfovibrio yellowstonii (strain ATCC 51303 / DSM 11347 / YP87).